The primary structure comprises 346 residues: uncharacterized protein (346 aa).

It belongs to the MG067/MG068/MG395 family.

This is an uncharacterized protein from Mycoplasma pneumoniae (strain ATCC 29342 / M129 / Subtype 1) (Mycoplasmoides pneumoniae).